A 563-amino-acid polypeptide reads, in one-letter code: Serine carboxypeptidase S10 family member 2 (563 aa).

An N-terminal signal peptide occupies residues 1–23; that stretch reads MNIKIILLSIILIIQLLLLNNNG. Residues 24 to 529 are Extracellular-facing; it reads GIVESKINFS…VPLTLGAWIG (506 aa). N31, N95, N110, and N213 each carry an N-linked (GlcNAc...) asparagine glycan. The active site involves S225. N244, N328, and N382 each carry an N-linked (GlcNAc...) asparagine glycan. D417 is an active-site residue. N468 is a glycosylation site (N-linked (GlcNAc...) asparagine). The active site involves H479. N-linked (GlcNAc...) asparagine glycosylation occurs at N499. A helical membrane pass occupies residues 530–550; the sequence is ITVGGCAFGFLVGGLIIYIIM. Topologically, residues 551–563 are cytoplasmic; that stretch reads KKSSKNGYYKVIQ.

Belongs to the peptidase S10 family.

It is found in the membrane. Probable carboxypeptidase. The chain is Serine carboxypeptidase S10 family member 2 from Dictyostelium discoideum (Social amoeba).